Consider the following 303-residue polypeptide: Recombination-associated protein RdgC (303 aa).

Belongs to the RdgC family.

It is found in the cytoplasm. The protein localises to the nucleoid. May be involved in recombination. The sequence is that of Recombination-associated protein RdgC from Shewanella piezotolerans (strain WP3 / JCM 13877).